The sequence spans 202 residues: Recoverin (202 aa).

A lipid anchor (N-myristoyl glycine) is attached at Gly-2. 4 EF-hand domains span residues 24–59 (TEEE…FFPE), 61–96 (DPKA…TSAG), 97–132 (KTNQ…IFKM), and 147–182 (TPEK…NKEI). Cys-39 bears the Cysteine sulfenic acid (-SOH) mark. Residues Asp-74, Asn-76, Asp-78, Thr-80, Glu-85, Asp-110, Asp-112, Asn-114, Thr-116, and Glu-121 each contribute to the Ca(2+) site. The tract at residues 189-192 (EPQK) is interaction with GRK1. A modulates EF-hand 3 domain calcium binding affinity region spans residues 191–202 (QKVKEKLKEKKL).

The protein belongs to the recoverin family. Homodimer; disulfide-linked. Homodimerization is caused by prolonged intense illumination. May form a complex composed of RHO, GRK1 and RCVRN in a Ca(2+)-dependent manner; RCVRN prevents the interaction between GRK1 and RHO. Interacts (via C-terminus) with GRK1 (via N-terminus); the interaction is Ca(2+)-dependent. The N-terminal glycine is linked to one of four different types of acyl groups. The most abundant is myristoleate (14:1), but 14:0, 14:2, and 12:0 acyl residues are also present. The Ca(2+) induced exposure of the myristoyl group, known as the calcium-myristoyl switch, promotes RCVRN binding to the photoreceptor cell membranes only when intracellular Ca(2+) concentration is high. Post-translationally, oxidation on Cys-39 occurs in response to prolonged intense illumination and results in the formation of disulfide homodimers, and to a lesser extent disulfide-linked heterodimers. Expressed in the retina (at protein level). Expressed in the pineal gland (at protein level).

Its subcellular location is the photoreceptor inner segment. It localises to the cell projection. The protein localises to the cilium. The protein resides in the photoreceptor outer segment. It is found in the photoreceptor outer segment membrane. Its subcellular location is the perikaryon. Acts as a calcium sensor and regulates phototransduction of cone and rod photoreceptor cells. Modulates light sensitivity of cone photoreceptor in dark and dim conditions. In response to high Ca(2+) levels induced by low light levels, prolongs RHO/rhodopsin activation in rod photoreceptor cells by binding to and inhibiting GRK1-mediated phosphorylation of RHO/rhodopsin. Plays a role in scotopic vision/enhances vision in dim light by enhancing signal transfer between rod photoreceptors and rod bipolar cells. Improves rod photoreceptor sensitivity in dim light and mediates response of rod photoreceptors to facilitate detection of change and motion in bright light. The sequence is that of Recoverin (RCVRN) from Bos taurus (Bovine).